The chain runs to 601 residues: uncharacterized protein (601 aa).

Residues 127 to 364 (SSLFSSGSPP…PAFANDDTVH (238 aa)) are disordered. The span at 128 to 137 (SLFSSGSPPD) shows a compositional bias: polar residues. Over residues 141 to 154 (RNSTSNLSSVSTNS) the composition is skewed to low complexity. Composition is skewed to polar residues over residues 159 to 177 (TIGSNYNMLQSTKSTASQR), 199 to 213 (ALSSPTQGASSNVTP), and 232 to 250 (SATNEANKLSDIQTSSPSQ). Residues S247 and S281 each carry the phosphoserine modification. Residues 265–281 (SLSSSPSSEDSDLSLSS) show a composition bias toward low complexity. Composition is skewed to basic and acidic residues over residues 286–296 (DEKKQPSKSEK) and 313–325 (GSKEQNRIAKEKA). S335 carries the post-translational modification Phosphoserine. Over residues 338 to 356 (DTSTEYDSNSLRRSRSNPA) the composition is skewed to polar residues.

This is an uncharacterized protein from Schizosaccharomyces pombe (strain 972 / ATCC 24843) (Fission yeast).